A 239-amino-acid polypeptide reads, in one-letter code: MGASIDDYSLVHKNILHSEDLLKYILETSAYPREHEQLKGLREVTEKHEWSSALVPADEGLFLSMLLKLMNAKRTIEIGVYTGYSLLTTALALPEDGKITAIDVNKSFFEIGLPFIQKAGVEHKINFIESEALPVLDQMLQEMKEEDLYDYAFVDADKSNYANYHERLVKLVRIGGAILYDNTLWYGSVAYPEYPGLHPEEEVARLSFRNLNTFLAADPRVEISQVSIGDGVTIXRRLY.

Residues V55, E77, 79-80, S85, D103, and A132 contribute to the S-adenosyl-L-methionine site; that span reads GV. D155 contributes to the a divalent metal cation binding site. D157 serves as a coordination point for S-adenosyl-L-methionine. A divalent metal cation-binding residues include D181 and N182.

The protein belongs to the class I-like SAM-binding methyltransferase superfamily. Cation-dependent O-methyltransferase family. Mg(2+) is required as a cofactor.

The enzyme catalyses norbelladine + S-adenosyl-L-methionine = 4'-O-methylnorbelladine + S-adenosyl-L-homocysteine + H(+). The protein operates within alkaloid biosynthesis. Functionally, 4'-O-methyltransferase converting norbelladine to 4'-O-methylnorbelladine. 4'-O-methylnorbelladine is a precursor to all Amaryllidaceae alkaloids such as galanthamine, lycorine and haemanthamine, and including haemanthamine- and crinamine-type alkaloids, promising anticancer agents. The protein is Norbelladine 4'-O-methyltransferase 3 of Narcissus aff. pseudonarcissus MK-2014 (Daffodil).